The following is a 952-amino-acid chain: Isoleucine--tRNA ligase (952 aa).

Residues 58–68 carry the 'HIGH' region motif; it reads PYANGDIHIGH. E576 contributes to the L-isoleucyl-5'-AMP binding site. Residues 617-621 carry the 'KMSKS' region motif; it reads KMSKS. Residue K620 participates in ATP binding. Residues C915, C918, C935, and C938 each contribute to the Zn(2+) site.

The protein belongs to the class-I aminoacyl-tRNA synthetase family. IleS type 1 subfamily. In terms of assembly, monomer. Requires Zn(2+) as cofactor.

The protein resides in the cytoplasm. The catalysed reaction is tRNA(Ile) + L-isoleucine + ATP = L-isoleucyl-tRNA(Ile) + AMP + diphosphate. Its function is as follows. Catalyzes the attachment of isoleucine to tRNA(Ile). As IleRS can inadvertently accommodate and process structurally similar amino acids such as valine, to avoid such errors it has two additional distinct tRNA(Ile)-dependent editing activities. One activity is designated as 'pretransfer' editing and involves the hydrolysis of activated Val-AMP. The other activity is designated 'posttransfer' editing and involves deacylation of mischarged Val-tRNA(Ile). The chain is Isoleucine--tRNA ligase from Aliivibrio fischeri (strain ATCC 700601 / ES114) (Vibrio fischeri).